A 340-amino-acid chain; its full sequence is Functional amyloid subunit FapC (340 aa).

A signal peptide spans 1–24; that stretch reads MKATMVLTPLALAMAAVLSVSAYA. A FapC_R1 repeat occupies 67–100; it reads NNASVSGSIKDASGNVGVNVAAGDNNQQANAAAL. The segment at 101-133 is linker 1; sequence ASADASFVFGTATASTSVLQSGYGNTLNNYSNP. One copy of the FapC_R2 repeat lies at 134–167; that stretch reads NTASLSNSANNVSGNLGVNVAAGNFNQQKNDLAA. The linker 2 stretch occupies residues 168 to 290; it reads AVSNGQYSTA…AIVGFKTPVT (123 aa). The stretch at 291–324 is one FapC_R3 repeat; sequence NNASLSNSLQNVSGNVGVNIAAGGGNQQSNSLSI. The Cys-X-X-Cys motif lies at 328 to 331; it reads CSSC.

This sequence belongs to the FapB/FapC family. As to quaternary structure, the major component of purified amyloid fibrils. Fibrils are resistant to boiling in 2% (weight/vol) SDS and require &gt;90% (vol/vol) formic acid to dissolve. Interacts with FapA in vitro.

Its subcellular location is the fimbrium. The protein localises to the secreted. Its function is as follows. The major functional amyloid subunit in this bacterium. Upon overexpression of the endogenous six-gene locus (fapA-fapF), cells form large clumps during liquid growth, make large amounts of biofilm and produce amyloid fibrils. In Pseudomonas aeruginosa (strain ATCC 15692 / DSM 22644 / CIP 104116 / JCM 14847 / LMG 12228 / 1C / PRS 101 / PAO1), this protein is Functional amyloid subunit FapC.